We begin with the raw amino-acid sequence, 154 residues long: Myoglobin (154 aa).

Residues 2-148 (GLSDGEWQLV…FRNDIAAKYK (147 aa)) form the Globin domain. Serine 4 is subject to Phosphoserine. Histidine 65 lines the nitrite pocket. Residue histidine 65 coordinates O2. Threonine 68 is modified (phosphothreonine). A heme b-binding site is contributed by histidine 94.

It belongs to the globin family. In terms of assembly, monomeric.

The protein resides in the cytoplasm. It localises to the sarcoplasm. The enzyme catalyses Fe(III)-heme b-[protein] + nitric oxide + H2O = Fe(II)-heme b-[protein] + nitrite + 2 H(+). It catalyses the reaction H2O2 + AH2 = A + 2 H2O. Monomeric heme protein which primary function is to store oxygen and facilitate its diffusion within muscle tissues. Reversibly binds oxygen through a pentacoordinated heme iron and enables its timely and efficient release as needed during periods of heightened demand. Depending on the oxidative conditions of tissues and cells, and in addition to its ability to bind oxygen, it also has a nitrite reductase activity whereby it regulates the production of bioactive nitric oxide. Under stress conditions, like hypoxia and anoxia, it also protects cells against reactive oxygen species thanks to its pseudoperoxidase activity. The protein is Myoglobin (MB) of Meles meles (Eurasian badger).